The sequence spans 440 residues: Eukaryotic translation initiation factor 3 subunit E (440 aa).

Residues 219-392 (VYFNYPKGRD…GQVVMGAKTT (174 aa)) form the PCI domain.

It belongs to the eIF-3 subunit E family. As to quaternary structure, component of the eukaryotic translation initiation factor 3 (eIF-3) complex.

Its subcellular location is the cytoplasm. Component of the eukaryotic translation initiation factor 3 (eIF-3) complex, which is involved in protein synthesis of a specialized repertoire of mRNAs and, together with other initiation factors, stimulates binding of mRNA and methionyl-tRNAi to the 40S ribosome. The eIF-3 complex specifically targets and initiates translation of a subset of mRNAs involved in cell proliferation. The polypeptide is Eukaryotic translation initiation factor 3 subunit E (Brugia malayi (Filarial nematode worm)).